A 408-amino-acid chain; its full sequence is Phosphoglycerate kinase (408 aa).

Residues 24-26, R40, 63-66, R120, and R160 each bind substrate; these read DIN and HQGR. Residues E331 and 357–360 contribute to the ATP site; that span reads GGHM.

The protein belongs to the phosphoglycerate kinase family.

Its subcellular location is the cytoplasm. The catalysed reaction is (2R)-3-phosphoglycerate + ATP = (2R)-3-phospho-glyceroyl phosphate + ADP. Its pathway is carbohydrate degradation; glycolysis; pyruvate from D-glyceraldehyde 3-phosphate: step 2/5. This is Phosphoglycerate kinase (pgk) from Saccharolobus solfataricus (strain ATCC 35092 / DSM 1617 / JCM 11322 / P2) (Sulfolobus solfataricus).